A 387-amino-acid chain; its full sequence is Major outer membrane porin (387 aa).

The N-terminal stretch at 1 to 22 is a signal peptide; that stretch reads MKKLLKSVLAFAVLGSASSLHA.

It belongs to the chlamydial porin (CP) (TC 1.B.2) family. Part of a disulfide cross-linked outer membrane complex (COMC) composed of the major outer membrane porin (MOMP), the small cysteine-rich protein (OmcA) and the large cysteine-rich periplasmic protein (OmcB).

It localises to the cell outer membrane. Functionally, in elementary bodies (EBs, the infectious stage, which is able to survive outside the host cell) provides the structural integrity of the outer envelope through disulfide cross-links with the small cysteine-rich protein and the large cysteine-rich periplasmic protein. It has been described in publications as the Sarkosyl-insoluble COMC (Chlamydia outer membrane complex), and serves as the functional equivalent of peptidoglycan. Its function is as follows. Permits diffusion of specific solutes through the outer membrane. The chain is Major outer membrane porin (ompA) from Chlamydia muridarum (strain MoPn / Nigg).